Here is a 370-residue protein sequence, read N- to C-terminus: Uroporphyrinogen decarboxylase (370 aa).

Residues 29–33, D79, Y155, S210, and H342 each bind substrate; that span reads RQAGR.

The protein belongs to the uroporphyrinogen decarboxylase family. Homodimer.

Its subcellular location is the cytoplasm. The enzyme catalyses uroporphyrinogen III + 4 H(+) = coproporphyrinogen III + 4 CO2. It functions in the pathway porphyrin-containing compound metabolism; protoporphyrin-IX biosynthesis; coproporphyrinogen-III from 5-aminolevulinate: step 4/4. Functionally, catalyzes the decarboxylation of four acetate groups of uroporphyrinogen-III to yield coproporphyrinogen-III. This Verminephrobacter eiseniae (strain EF01-2) protein is Uroporphyrinogen decarboxylase.